The sequence spans 152 residues: UPF0756 membrane protein CA_C0092 (152 aa).

4 helical membrane passes run 5-25 (IILV…VAIS), 50-70 (MFWG…QGNV), 82-102 (FVGI…GVGL), and 117-137 (LILG…GPLI).

Belongs to the UPF0756 family.

Its subcellular location is the cell membrane. The sequence is that of UPF0756 membrane protein CA_C0092 from Clostridium acetobutylicum (strain ATCC 824 / DSM 792 / JCM 1419 / IAM 19013 / LMG 5710 / NBRC 13948 / NRRL B-527 / VKM B-1787 / 2291 / W).